Here is a 237-residue protein sequence, read N- to C-terminus: Aliphatic sulfonates import ATP-binding protein SsuB 1 (237 aa).

The ABC transporter domain maps to 5–221 (LMDIRVEHKA…PRDRRDPLLA (217 aa)). 38–45 (GPSGCGKS) serves as a coordination point for ATP.

The protein belongs to the ABC transporter superfamily. Aliphatic sulfonates importer (TC 3.A.1.17.2) family. In terms of assembly, the complex is composed of two ATP-binding proteins (SsuB), two transmembrane proteins (SsuC) and a solute-binding protein (SsuA).

It localises to the cell inner membrane. The catalysed reaction is ATP + H2O + aliphatic sulfonate-[sulfonate-binding protein]Side 1 = ADP + phosphate + aliphatic sulfonateSide 2 + [sulfonate-binding protein]Side 1.. Its function is as follows. Part of the ABC transporter complex SsuABC involved in aliphatic sulfonates import. Responsible for energy coupling to the transport system. The chain is Aliphatic sulfonates import ATP-binding protein SsuB 1 from Pseudomonas syringae pv. syringae (strain B728a).